Reading from the N-terminus, the 172-residue chain is Large ribosomal subunit protein uL10 (172 aa).

It belongs to the universal ribosomal protein uL10 family. In terms of assembly, part of the ribosomal stalk of the 50S ribosomal subunit. The N-terminus interacts with L11 and the large rRNA to form the base of the stalk. The C-terminus forms an elongated spine to which L12 dimers bind in a sequential fashion forming a multimeric L10(L12)X complex.

Functionally, forms part of the ribosomal stalk, playing a central role in the interaction of the ribosome with GTP-bound translation factors. In Rhizobium rhizogenes (strain K84 / ATCC BAA-868) (Agrobacterium radiobacter), this protein is Large ribosomal subunit protein uL10.